The primary structure comprises 416 residues: Serine--tRNA ligase (416 aa).

Position 232-234 (232-234) interacts with L-serine; it reads TAE. An ATP-binding site is contributed by 263–265; it reads RKE. Glu-286 is an L-serine binding site. Residue 350-353 participates in ATP binding; it reads EISS. Ser-384 serves as a coordination point for L-serine.

The protein belongs to the class-II aminoacyl-tRNA synthetase family. Type-1 seryl-tRNA synthetase subfamily. As to quaternary structure, homodimer. The tRNA molecule binds across the dimer.

It is found in the cytoplasm. The enzyme catalyses tRNA(Ser) + L-serine + ATP = L-seryl-tRNA(Ser) + AMP + diphosphate + H(+). It catalyses the reaction tRNA(Sec) + L-serine + ATP = L-seryl-tRNA(Sec) + AMP + diphosphate + H(+). Its pathway is aminoacyl-tRNA biosynthesis; selenocysteinyl-tRNA(Sec) biosynthesis; L-seryl-tRNA(Sec) from L-serine and tRNA(Sec): step 1/1. Catalyzes the attachment of serine to tRNA(Ser). Is also able to aminoacylate tRNA(Sec) with serine, to form the misacylated tRNA L-seryl-tRNA(Sec), which will be further converted into selenocysteinyl-tRNA(Sec). The polypeptide is Serine--tRNA ligase (Nautilia profundicola (strain ATCC BAA-1463 / DSM 18972 / AmH)).